The primary structure comprises 89 residues: Small ribosomal subunit protein uS15 (89 aa).

It belongs to the universal ribosomal protein uS15 family. As to quaternary structure, part of the 30S ribosomal subunit. Forms a bridge to the 50S subunit in the 70S ribosome, contacting the 23S rRNA.

In terms of biological role, one of the primary rRNA binding proteins, it binds directly to 16S rRNA where it helps nucleate assembly of the platform of the 30S subunit by binding and bridging several RNA helices of the 16S rRNA. Forms an intersubunit bridge (bridge B4) with the 23S rRNA of the 50S subunit in the ribosome. This Paenarthrobacter aurescens (strain TC1) protein is Small ribosomal subunit protein uS15.